The primary structure comprises 458 residues: NADH-quinone oxidoreductase subunit N (458 aa).

Transmembrane regions (helical) follow at residues 2–22 (LLIL…CFAL), 30–50 (IIYN…FKYS), 62–82 (GINI…SLII), 93–113 (AIKF…FVAI), 118–138 (FLLL…LAGF), 153–173 (FILG…IYGF), 196–216 (LIIG…SSPL), 235–255 (FTSA…KLII), 261–281 (INYN…AFGA), 290–310 (LMAY…ILPN), 319–339 (LYIL…IMLF), 361–381 (IAAL…LTGF), 397–417 (FTLA…YLKV), and 438–458 (LLLI…IILF).

Belongs to the complex I subunit 2 family. NDH-1 is composed of 14 different subunits. Subunits NuoA, H, J, K, L, M, N constitute the membrane sector of the complex.

It is found in the cell inner membrane. It catalyses the reaction a quinone + NADH + 5 H(+)(in) = a quinol + NAD(+) + 4 H(+)(out). Functionally, NDH-1 shuttles electrons from NADH, via FMN and iron-sulfur (Fe-S) centers, to quinones in the respiratory chain. The immediate electron acceptor for the enzyme in this species is believed to be ubiquinone. Couples the redox reaction to proton translocation (for every two electrons transferred, four hydrogen ions are translocated across the cytoplasmic membrane), and thus conserves the redox energy in a proton gradient. In Rickettsia typhi (strain ATCC VR-144 / Wilmington), this protein is NADH-quinone oxidoreductase subunit N.